The chain runs to 304 residues: Proteasome subunit beta (304 aa).

Residues 1–65 constitute a propeptide, removed in mature form; by autocatalysis; it reads MTWPHFEQLA…LTPTDAVPHG (65 aa). The active-site Nucleophile is the threonine 66.

This sequence belongs to the peptidase T1B family. The 20S proteasome core is composed of 14 alpha and 14 beta subunits that assemble into four stacked heptameric rings, resulting in a barrel-shaped structure. The two inner rings, each composed of seven catalytic beta subunits, are sandwiched by two outer rings, each composed of seven alpha subunits. The catalytic chamber with the active sites is on the inside of the barrel. Has a gated structure, the ends of the cylinder being occluded by the N-termini of the alpha-subunits. Is capped by the proteasome-associated ATPase, ARC.

It localises to the cytoplasm. The enzyme catalyses Cleavage of peptide bonds with very broad specificity.. The protein operates within protein degradation; proteasomal Pup-dependent pathway. With respect to regulation, the formation of the proteasomal ATPase ARC-20S proteasome complex, likely via the docking of the C-termini of ARC into the intersubunit pockets in the alpha-rings, may trigger opening of the gate for substrate entry. Interconversion between the open-gate and close-gate conformations leads to a dynamic regulation of the 20S proteasome proteolysis activity. Functionally, component of the proteasome core, a large protease complex with broad specificity involved in protein degradation. The sequence is that of Proteasome subunit beta from Mycobacterium sp. (strain JLS).